We begin with the raw amino-acid sequence, 396 residues long: S-adenosylmethionine synthase (396 aa).

H16 serves as a coordination point for ATP. Residue D18 participates in Mg(2+) binding. E44 is a binding site for K(+). The L-methionine site is built by E57 and Q100. Residues 100–110 (QSPDIAQGVDR) form a flexible loop region. Residues 167-169 (DAK), 233-234 (RF), D242, 248-249 (RK), A265, and K269 each bind ATP. Position 242 (D242) interacts with L-methionine. Residue K273 participates in L-methionine binding.

Belongs to the AdoMet synthase family. As to quaternary structure, homotetramer; dimer of dimers. Mg(2+) serves as cofactor. K(+) is required as a cofactor.

Its subcellular location is the cytoplasm. It catalyses the reaction L-methionine + ATP + H2O = S-adenosyl-L-methionine + phosphate + diphosphate. It participates in amino-acid biosynthesis; S-adenosyl-L-methionine biosynthesis; S-adenosyl-L-methionine from L-methionine: step 1/1. Catalyzes the formation of S-adenosylmethionine (AdoMet) from methionine and ATP. The overall synthetic reaction is composed of two sequential steps, AdoMet formation and the subsequent tripolyphosphate hydrolysis which occurs prior to release of AdoMet from the enzyme. This Paraburkholderia xenovorans (strain LB400) protein is S-adenosylmethionine synthase.